A 582-amino-acid chain; its full sequence is Proline--tRNA ligase (582 aa).

Belongs to the class-II aminoacyl-tRNA synthetase family. ProS type 1 subfamily. As to quaternary structure, homodimer.

The protein localises to the cytoplasm. The catalysed reaction is tRNA(Pro) + L-proline + ATP = L-prolyl-tRNA(Pro) + AMP + diphosphate. Functionally, catalyzes the attachment of proline to tRNA(Pro) in a two-step reaction: proline is first activated by ATP to form Pro-AMP and then transferred to the acceptor end of tRNA(Pro). As ProRS can inadvertently accommodate and process non-cognate amino acids such as alanine and cysteine, to avoid such errors it has two additional distinct editing activities against alanine. One activity is designated as 'pretransfer' editing and involves the tRNA(Pro)-independent hydrolysis of activated Ala-AMP. The other activity is designated 'posttransfer' editing and involves deacylation of mischarged Ala-tRNA(Pro). The misacylated Cys-tRNA(Pro) is not edited by ProRS. In Mycobacterium tuberculosis (strain CDC 1551 / Oshkosh), this protein is Proline--tRNA ligase.